The sequence spans 223 residues: Cell division protein SepF (223 aa).

Residues 19-81 are disordered; that stretch reads YDDEYYDDRG…YPPPGGYRGG (63 aa). Residues 36–69 show a composition bias toward basic and acidic residues; sequence PRFEDDYGRYEGRDFEDPRRDPRAGMRADLRGEP.

It belongs to the SepF family. In terms of assembly, homodimer. Interacts with FtsZ.

Its subcellular location is the cytoplasm. In terms of biological role, cell division protein that is part of the divisome complex and is recruited early to the Z-ring. Probably stimulates Z-ring formation, perhaps through the cross-linking of FtsZ protofilaments. Its function overlaps with FtsA. The sequence is that of Cell division protein SepF from Mycobacterium ulcerans (strain Agy99).